The following is a 179-amino-acid chain: MTVSTERAVLAGGCFWGMQALLRRYPGVISTRVGYTGGDVPDATYRNHGDHAEAIEVNFDPTVTSYRQLLEFFFQIHDPTTEDRQGYDQGLSYRSAIFYTNEEQKRIAEETIAEIDASGLWPGYVVTDVEPAGPFWEAEPEHQDYLERVPNGYTCHFVRPNWKLPRKQDAGQTAAGGDR.

Residue Cys-14 is part of the active site.

It belongs to the MsrA Met sulfoxide reductase family.

It carries out the reaction L-methionyl-[protein] + [thioredoxin]-disulfide + H2O = L-methionyl-(S)-S-oxide-[protein] + [thioredoxin]-dithiol. The catalysed reaction is [thioredoxin]-disulfide + L-methionine + H2O = L-methionine (S)-S-oxide + [thioredoxin]-dithiol. Its function is as follows. Has an important function as a repair enzyme for proteins that have been inactivated by oxidation. Catalyzes the reversible oxidation-reduction of methionine sulfoxide in proteins to methionine. The polypeptide is Peptide methionine sulfoxide reductase MsrA (Nitrobacter winogradskyi (strain ATCC 25391 / DSM 10237 / CIP 104748 / NCIMB 11846 / Nb-255)).